Here is a 733-residue protein sequence, read N- to C-terminus: Polyribonucleotide nucleotidyltransferase (733 aa).

Positions 503 and 509 each coordinate Mg(2+). The 60-residue stretch at 570–629 folds into the KH domain; that stretch reads PRLTTIQIPVDAIGMVIGKGGETIRSITEETGAEINIDDDGTVTIACSSPEATKAAVETI. The region spanning 639 to 713 is the S1 motif domain; that stretch reads GTIYMGKVRD…GKTKFALSIK (75 aa).

It belongs to the polyribonucleotide nucleotidyltransferase family. It depends on Mg(2+) as a cofactor.

It is found in the cytoplasm. It carries out the reaction RNA(n+1) + phosphate = RNA(n) + a ribonucleoside 5'-diphosphate. In terms of biological role, involved in mRNA degradation. Catalyzes the phosphorolysis of single-stranded polyribonucleotides processively in the 3'- to 5'-direction. The sequence is that of Polyribonucleotide nucleotidyltransferase from Chlorobaculum tepidum (strain ATCC 49652 / DSM 12025 / NBRC 103806 / TLS) (Chlorobium tepidum).